The primary structure comprises 622 residues: 1-deoxy-D-xylulose-5-phosphate synthase (622 aa).

Thiamine diphosphate contacts are provided by residues histidine 80 and 121-123; that span reads GHS. Aspartate 152 contributes to the Mg(2+) binding site. Thiamine diphosphate is bound by residues 153-154, asparagine 181, tyrosine 288, and glutamate 370; that span reads GA. Asparagine 181 serves as a coordination point for Mg(2+).

Belongs to the transketolase family. DXPS subfamily. In terms of assembly, homodimer. Requires Mg(2+) as cofactor. Thiamine diphosphate serves as cofactor.

It catalyses the reaction D-glyceraldehyde 3-phosphate + pyruvate + H(+) = 1-deoxy-D-xylulose 5-phosphate + CO2. It functions in the pathway metabolic intermediate biosynthesis; 1-deoxy-D-xylulose 5-phosphate biosynthesis; 1-deoxy-D-xylulose 5-phosphate from D-glyceraldehyde 3-phosphate and pyruvate: step 1/1. Catalyzes the acyloin condensation reaction between C atoms 2 and 3 of pyruvate and glyceraldehyde 3-phosphate to yield 1-deoxy-D-xylulose-5-phosphate (DXP). This chain is 1-deoxy-D-xylulose-5-phosphate synthase, found in Shewanella oneidensis (strain ATCC 700550 / JCM 31522 / CIP 106686 / LMG 19005 / NCIMB 14063 / MR-1).